A 198-amino-acid polypeptide reads, in one-letter code: Hookworm platelet inhibitor 1 (198 aa).

A signal peptide spans 1-17; that stretch reads MSSYLLVLVAILGFAYA. Disulfide bonds link Cys24–Cys65, Cys78–Cys146, Cys141–Cys154, Cys174–Cys186, and Cys177–Cys195.

It belongs to the CRISP family. As to quaternary structure, monomer. As to expression, detected in cephalic glands.

It localises to the secreted. Functionally, hookworms inhibitor of platelet aggregation and adhesion. Native protein inhibits platelet aggregation induced by ADP, epinephrine, and thrombin. In addition, it prevents adhesion of resting platelets to immobilized fibrinogen and collagen. May act by binding to glycoprotein IIb/IIIa (ITGA2B/ITGB3) and integrin alpha-2/beta-1 (ITGA1/ITGB1), respectively. It is noteworthy that the recombinant protein fails to inhibit binding to fibrinogen (through ITGA2B/ITGB3) and collagen (through ITGA1/ITGB1). This chain is Hookworm platelet inhibitor 1, found in Ancylostoma caninum (Dog hookworm).